The primary structure comprises 181 residues: ADP-ribosylation factor 1-like 2 (181 aa).

Residue Gly-2 is the site of N-myristoyl glycine attachment. Residues 3–16 (NVFGSLFKGLFGKK) are important for the stable binding to the membranes. GTP contacts are provided by residues 24 to 32 (GLDAAGKTT), 126 to 129 (NKQD), and Ala-160.

It belongs to the small GTPase superfamily. Arf family.

It localises to the golgi apparatus membrane. It catalyses the reaction GTP + H2O = GDP + phosphate + H(+). Its activity is regulated as follows. Alternates between an inactive GDP-bound form and an active GTP-bound form. Activated by a guanine nucleotide-exchange factor (GEF) and inactivated by GTPase-activating protein (GAP). Its function is as follows. Small GTPase involved in protein trafficking between different compartments. Modulates vesicle budding and uncoating within the Golgi complex. In its GTP-bound form, triggers the recruitment of coatomer proteins to the Golgi membrane. The hydrolysis of ARF1-bound GTP, which is mediated by ARFGAPs proteins, is required for dissociation of coat proteins from Golgi membranes and vesicles. Involved in endoplasmic reticulum dynamics during embryogenesis. Also required for adult germline function. Plays a role in cell shedding during embryogenesis probably by promoting the endocytosis of cell adhesion molecules. During neurogenesis, involved in cell autonomous Q.p neuroblast asymmetric divisions that generate one precursor cell and one apoptotic cell, probably by controlling endocytosis. Plays a role in maintaining mitochondrial morphology. This Caenorhabditis briggsae protein is ADP-ribosylation factor 1-like 2 (arf-1.2).